The primary structure comprises 325 residues: 5-dehydro-2-deoxygluconokinase (325 aa).

This sequence belongs to the carbohydrate kinase PfkB family.

The catalysed reaction is 5-dehydro-2-deoxy-D-gluconate + ATP = 6-phospho-5-dehydro-2-deoxy-D-gluconate + ADP + H(+). It functions in the pathway polyol metabolism; myo-inositol degradation into acetyl-CoA; acetyl-CoA from myo-inositol: step 5/7. Its function is as follows. Catalyzes the phosphorylation of 5-dehydro-2-deoxy-D-gluconate (2-deoxy-5-keto-D-gluconate or DKG) to 6-phospho-5-dehydro-2-deoxy-D-gluconate (DKGP). The chain is 5-dehydro-2-deoxygluconokinase (iolC) from Bacillus subtilis (strain 168).